We begin with the raw amino-acid sequence, 1409 residues long: MKSLLDLFKQFTPDEHFDAIKIGMASPEKIRSWSFGEVKKPETINYRTFKPERDGLFCAKIFGPIKDYECLCGKYKRLKHRGVICEKCGVEVTQTKVRRERMGHIDLAAPCAHIWFLKSLPSRLGLVLDMTLRDIERVLYFEAYVVTDPGMTPLKKFGIMSEDDYDAKRKEYGDEFVAKMGAEGIKELLEGIDIEIEIEKLRGDLTGSEVKVKKNAKRLKVLEAFKKSGIKPEWMILEVLPVLPPDLRPLVPLDGGRFATSDLNDLYRRVINRNSRLRRLLELKAPEIIARNEKRMLQEAVDSLLDNGRRGKAMTGANKRALKSLADMIKGKSGRFRQNLLGKRVDYSGRSVITVGPTLKLHQCGLPKLMALELFKPFIFSRLEAMGIATTIKAAKKEVEAGTPVVWDILEEVIKEHPVMLNRAPTLHRLGIQAFEPILIEGKAIQLHPLVCAAFNADFDGDQMAVHVPLSVEAQLEARTLMLASNNVLFPASGEPSIVPSQDVVLGLYHATREKINGKGEGLVFADTGEVQRALDAGEAELHAKISVRLTEWTKDKATGEFVPETKLVDTTVGRALLSEILPKGLPFSNLNKALKKKEISKLINASFRKCGLKDTVVFADKLLQNGFRLATHAGFSVAIDDMLVPPQKAEILARAEAEVKEIEQQYVSGLVTAGERYNKVVDIWGKAGDDVSKVMMDQLKVQKTIDRNGKEVNEESFNAIYMMADSGARGSAAQIRQLAGMRGLMAKPDGSIIETPITANFREGLNVLQYFISTHGARKGLADTALKTANSGYLTRRLVDVTQDLVVTEDDCGTSNGSLMRAIVEGGEVIESLRDRILGRTAAEEVLHPETRAVLAQPGRMLDEDLIEELEAAGVDEVKVRTALTCETRYGLCAKCYGRDLGRGGLINLGEAVGVIAAQSIGEPGTQLTMRTFHIGGAASRAAVASSVEAKSNGIIGFNATMRYVTNTKGELVVIARSGEIIIQDEHGRERERHKVPYGATLTVKADQTIKAGTILANWDPLTRPIITEYAGTVKFENVEEGLTVAKQVDEVTGLSTLVVIDPKRRGSAKVVRPQVKLVDADGKEVKIPGTDHSVTIGFQVGALIQVRDGQEVGPGEVLARIPMEGQKTRDITGGLPRVAELFEARSPKDKGMLAEMTGTISFGKETKGKVRLQITDPDGKVWDELVPKEKNVLVHEGQVVNKGELIVDGPADPQDILRLLGIEELSRYIVDEVQDVYRLQGVKINDKHIEVIVRQMLRRVVVENPGESTYIAGEQVERSEILNTNEALQAEGKLPATYSNVLLGITKASLSTDSFISAASFQETTRVLTEAAIMGKRDELRGLKENVIVGRLIPAGTGLAYHQARKAKDAMDEAERRAIADAEAAELASAGTDDAAAEIDGSADTAD.

Positions 70, 72, 85, and 88 each coordinate Zn(2+). Asp458, Asp460, and Asp462 together coordinate Mg(2+). Residues Cys813, Cys887, Cys894, and Cys897 each coordinate Zn(2+).

It belongs to the RNA polymerase beta' chain family. The RNAP catalytic core consists of 2 alpha, 1 beta, 1 beta' and 1 omega subunit. When a sigma factor is associated with the core the holoenzyme is formed, which can initiate transcription. Requires Mg(2+) as cofactor. Zn(2+) is required as a cofactor.

The catalysed reaction is RNA(n) + a ribonucleoside 5'-triphosphate = RNA(n+1) + diphosphate. Functionally, DNA-dependent RNA polymerase catalyzes the transcription of DNA into RNA using the four ribonucleoside triphosphates as substrates. This chain is DNA-directed RNA polymerase subunit beta', found in Acidovorax ebreus (strain TPSY) (Diaphorobacter sp. (strain TPSY)).